The following is a 525-amino-acid chain: Putative ankyrin repeat protein FPV228 (525 aa).

9 ANK repeats span residues 39–71 (HPDN…TRDI), 72–122 (LGNT…ACNN), 123–152 (LNQT…KVNI), 156–185 (YGNT…DVNI), 190–226 (YWYS…TRCR), 227–254 (LNTT…DINA), 258–287 (NDNA…DVNM), 291–320 (RGKT…NPNI), and 324–353 (IMNT…DINH).

This is Putative ankyrin repeat protein FPV228 from Fowlpox virus (strain NVSL) (FPV).